The primary structure comprises 60 residues: uncharacterized protein (60 aa).

A helical transmembrane segment spans residues 14–34; the sequence is MLFLGTIGLAVVVGGLMAYGY. The interval 38–60 is disordered; it reads GKTPSSGTSFHTASPSFSSRYRY. A compositionally biased stretch (polar residues) spans 40-60; it reads TPSSGTSFHTASPSFSSRYRY.

The protein resides in the host membrane. This is an uncharacterized protein from Dryophytes versicolor (chameleon treefrog).